Consider the following 278-residue polypeptide: Ankyrin repeat and SOCS box protein 13 (278 aa).

ANK repeat units lie at residues 18 to 47 (VERT…CVNQ), 51 to 80 (DSIT…QVDA), 84 to 113 (DGST…KVNP), 116 to 145 (YTAS…NLEA), 149 to 178 (HFGT…NVNA), and 181 to 210 (LHET…NIYA). Residues 229-278 (AKCFEYYEKTPLTLSQLCRVNLRKATGVRGLEKIAKLNIPPRLIDYLSYN) form the SOCS box domain.

The protein belongs to the ankyrin SOCS box (ASB) family.

It participates in protein modification; protein ubiquitination. May be a substrate-recognition component of a SCF-like ECS (Elongin-Cullin-SOCS-box protein) E3 ubiquitin-protein ligase complex which mediates the ubiquitination and subsequent proteasomal degradation of target proteins. This is Ankyrin repeat and SOCS box protein 13 (ASB13) from Homo sapiens (Human).